A 155-amino-acid chain; its full sequence is SsrA-binding protein (155 aa).

This sequence belongs to the SmpB family.

Its subcellular location is the cytoplasm. Its function is as follows. Required for rescue of stalled ribosomes mediated by trans-translation. Binds to transfer-messenger RNA (tmRNA), required for stable association of tmRNA with ribosomes. tmRNA and SmpB together mimic tRNA shape, replacing the anticodon stem-loop with SmpB. tmRNA is encoded by the ssrA gene; the 2 termini fold to resemble tRNA(Ala) and it encodes a 'tag peptide', a short internal open reading frame. During trans-translation Ala-aminoacylated tmRNA acts like a tRNA, entering the A-site of stalled ribosomes, displacing the stalled mRNA. The ribosome then switches to translate the ORF on the tmRNA; the nascent peptide is terminated with the 'tag peptide' encoded by the tmRNA and targeted for degradation. The ribosome is freed to recommence translation, which seems to be the essential function of trans-translation. The protein is SsrA-binding protein of Streptococcus pneumoniae (strain P1031).